Consider the following 201-residue polypeptide: Small ribosomal subunit protein uS4 (201 aa).

The segment at 1–45 (MARYTGPLTKKSRRLGTDLVGNDKSFERRPYPPGVHGRGRTKDSE) is disordered. The S4 RNA-binding domain occupies 91–157 (SRLDNVVYRA…PPIVIARETF (67 aa)).

This sequence belongs to the universal ribosomal protein uS4 family. In terms of assembly, part of the 30S ribosomal subunit. Contacts protein S5. The interaction surface between S4 and S5 is involved in control of translational fidelity.

Functionally, one of the primary rRNA binding proteins, it binds directly to 16S rRNA where it nucleates assembly of the body of the 30S subunit. Its function is as follows. With S5 and S12 plays an important role in translational accuracy. The polypeptide is Small ribosomal subunit protein uS4 (Cutibacterium acnes (strain DSM 16379 / KPA171202) (Propionibacterium acnes)).